The primary structure comprises 456 residues: UDP-N-acetylglucosamine 1-carboxyvinyltransferase (456 aa).

A phosphoenolpyruvate-binding site is contributed by 34 to 35; it reads KN. Arginine 104 is a binding site for UDP-N-acetyl-alpha-D-glucosamine. Cysteine 128 (proton donor) is an active-site residue. Cysteine 128 is modified (2-(S-cysteinyl)pyruvic acid O-phosphothioketal). Residues aspartate 319 and isoleucine 341 each coordinate UDP-N-acetyl-alpha-D-glucosamine.

This sequence belongs to the EPSP synthase family. MurA subfamily.

The protein resides in the cytoplasm. It carries out the reaction phosphoenolpyruvate + UDP-N-acetyl-alpha-D-glucosamine = UDP-N-acetyl-3-O-(1-carboxyvinyl)-alpha-D-glucosamine + phosphate. The protein operates within cell wall biogenesis; peptidoglycan biosynthesis. Cell wall formation. Adds enolpyruvyl to UDP-N-acetylglucosamine. The chain is UDP-N-acetylglucosamine 1-carboxyvinyltransferase from Prochlorococcus marinus (strain MIT 9312).